We begin with the raw amino-acid sequence, 182 residues long: Urease accessory protein UreE (182 aa).

A disordered region spans residues 128 to 182; sequence PRTEPFRPEGGAYGHGRTLGHDHGPAQGHGHDHPHVHVHISHKPDEDETPDADPA. The span at 146 to 162 shows a compositional bias: basic and acidic residues; it reads LGHDHGPAQGHGHDHPH. The span at 173 to 182 shows a compositional bias: acidic residues; sequence EDETPDADPA.

Belongs to the UreE family.

Its subcellular location is the cytoplasm. In terms of biological role, involved in urease metallocenter assembly. Binds nickel. Probably functions as a nickel donor during metallocenter assembly. This Cereibacter sphaeroides (strain ATCC 17023 / DSM 158 / JCM 6121 / CCUG 31486 / LMG 2827 / NBRC 12203 / NCIMB 8253 / ATH 2.4.1.) (Rhodobacter sphaeroides) protein is Urease accessory protein UreE.